The following is a 269-amino-acid chain: Formamidopyrimidine-DNA glycosylase (269 aa).

The active-site Schiff-base intermediate with DNA is the proline 2. Glutamate 3 serves as the catalytic Proton donor. The active-site Proton donor; for beta-elimination activity is the lysine 57. The DNA site is built by histidine 90, arginine 109, and lysine 150. The FPG-type zinc finger occupies 235 to 269; it reads QVYGRKGEPCRVCGTPIAATKHAQRATFYCRHCQK. Arginine 259 (proton donor; for delta-elimination activity) is an active-site residue.

The protein belongs to the FPG family. As to quaternary structure, monomer. Zn(2+) is required as a cofactor.

It catalyses the reaction Hydrolysis of DNA containing ring-opened 7-methylguanine residues, releasing 2,6-diamino-4-hydroxy-5-(N-methyl)formamidopyrimidine.. The enzyme catalyses 2'-deoxyribonucleotide-(2'-deoxyribose 5'-phosphate)-2'-deoxyribonucleotide-DNA = a 3'-end 2'-deoxyribonucleotide-(2,3-dehydro-2,3-deoxyribose 5'-phosphate)-DNA + a 5'-end 5'-phospho-2'-deoxyribonucleoside-DNA + H(+). Its function is as follows. Involved in base excision repair of DNA damaged by oxidation or by mutagenic agents. Acts as a DNA glycosylase that recognizes and removes damaged bases. Has a preference for oxidized purines, such as 7,8-dihydro-8-oxoguanine (8-oxoG). Has AP (apurinic/apyrimidinic) lyase activity and introduces nicks in the DNA strand. Cleaves the DNA backbone by beta-delta elimination to generate a single-strand break at the site of the removed base with both 3'- and 5'-phosphates. The polypeptide is Formamidopyrimidine-DNA glycosylase (Salmonella paratyphi B (strain ATCC BAA-1250 / SPB7)).